The chain runs to 122 residues: Putative protein adenylyltransferase MJ1547 (122 aa).

The GSX(10)DXD motif signature appears at 11–25 (GSYAKNEYTKRSDID). The Mg(2+) site is built by Asp-23, Asp-25, and Asp-48.

This sequence belongs to the MntA antitoxin family. As to quaternary structure, probably forms a complex with cognate toxin MJ1548. Mg(2+) is required as a cofactor.

It catalyses the reaction L-tyrosyl-[protein] + ATP = O-(5'-adenylyl)-L-tyrosyl-[protein] + diphosphate. The enzyme catalyses O-(5'-adenylyl)-L-tyrosyl-[protein] + ATP = O-[5'-(adenylyl-(5'-&gt;3')-adenylyl)]-L-tyrosyl-[protein] + diphosphate. Probable antitoxin component of a putative type VII toxin-antitoxin (TA) system. Neutralizes cognate toxic MJ1548 by di-AMPylation. This Methanocaldococcus jannaschii (strain ATCC 43067 / DSM 2661 / JAL-1 / JCM 10045 / NBRC 100440) (Methanococcus jannaschii) protein is Putative protein adenylyltransferase MJ1547.